The chain runs to 147 residues: Sulfur acceptor protein CsdE (147 aa).

The active-site Cysteine persulfide intermediate is cysteine 61. At cysteine 61 the chain carries Cysteine persulfide.

The protein belongs to the SufE family. In terms of assembly, homodimer. Forms a heterodimer with CsdA. Interacts with CsdA and with TcdA/CsdL.

Stimulates the cysteine desulfurase activity of CsdA. Contains a cysteine residue (Cys-61) that acts to accept sulfur liberated via the desulfurase activity of CsdA. May be able to transfer sulfur to TcdA/CsdL. Seems to support the function of TcdA in the generation of cyclic threonylcarbamoyladenosine at position 37 (ct(6)A37) in tRNAs that read codons beginning with adenine. Does not appear to participate in Fe/S biogenesis. The polypeptide is Sulfur acceptor protein CsdE (csdE) (Escherichia coli (strain K12)).